We begin with the raw amino-acid sequence, 243 residues long: Ribonuclease 3 (243 aa).

Positions 15–144 (NDTISKIINY…LIGAIYIDGG (130 aa)) constitute an RNase III domain. Glu57 contributes to the Mg(2+) binding site. Residue Asp61 is part of the active site. Asn130 and Glu133 together coordinate Mg(2+). The active site involves Glu133. The DRBM domain occupies 169–238 (DPKTSLQEWT…AELMLEKINN (70 aa)).

The protein belongs to the ribonuclease III family. As to quaternary structure, homodimer. It depends on Mg(2+) as a cofactor.

The protein localises to the cytoplasm. The enzyme catalyses Endonucleolytic cleavage to 5'-phosphomonoester.. Functionally, digests double-stranded RNA. Involved in the processing of primary rRNA transcript to yield the immediate precursors to the large and small rRNAs (23S and 16S). Processes some mRNAs, and tRNAs when they are encoded in the rRNA operon. Processes pre-crRNA and tracrRNA of type II CRISPR loci if present in the organism. This is Ribonuclease 3 from Wolbachia sp. subsp. Brugia malayi (strain TRS).